Consider the following 520-residue polypeptide: MELIKEIETSRNSSVLLKAIFEGDDAPTLLVKKQSQITEYLKENVAYVYLGKKSEFGYKDAYEFARDLAENCARSYQLDLTTFVTEKLCIKGVVDAFTKGINFSAFQYYNLKTFTKRVNENSLSFYLENISQDVLNVFKKALILVDAQNFARNLGVTPPNELNSEQLAEIIRKDFKKYHNLKVKVLERKQIELLGMDLLLSVNKGSVYEPRVVIIEYKGNPSSQEKTVLVGKGITFDSGGYSLKPPKFMLGMKYDMSGSAIVAAVMKAIAQLKPNKNVSAIMCITDNRINGDASLPDSVYTSMSGKTVEVNNTDAEGRLVLADRLYYGATKLNATRLIDTATLTGTMLTALGQTYSGIYATSCKIWHQFEDAAKIAHEKVWRMPLHEDFNKTNKESLVADLNNYSNNEKSDCNTAAMFLKEFTNNVPYIHCDVAGTADKKGMGLGILVSTFVEFGKSQQRNCESCECDEQKCETKNCNIEESTTKIVKAKKSTAKKATTKKTTTRKTASKTKSTKSKARK.

Residues lysine 232 and aspartate 237 each coordinate Mn(2+). Lysine 244 is a catalytic residue. Positions 255, 314, and 316 each coordinate Mn(2+). Arginine 318 is an active-site residue. The disordered stretch occupies residues 488 to 520 (KAKKSTAKKATTKKTTTRKTASKTKSTKSKARK).

It belongs to the peptidase M17 family. Mn(2+) is required as a cofactor.

The protein localises to the cytoplasm. It catalyses the reaction Release of an N-terminal amino acid, Xaa-|-Yaa-, in which Xaa is preferably Leu, but may be other amino acids including Pro although not Arg or Lys, and Yaa may be Pro. Amino acid amides and methyl esters are also readily hydrolyzed, but rates on arylamides are exceedingly low.. The catalysed reaction is Release of an N-terminal amino acid, preferentially leucine, but not glutamic or aspartic acids.. Its function is as follows. Presumably involved in the processing and regular turnover of intracellular proteins. Catalyzes the removal of unsubstituted N-terminal amino acids from various peptides. This is Probable cytosol aminopeptidase (pepA) from Metamycoplasma salivarium (Mycoplasma salivarium).